The sequence spans 45 residues: Cytochrome b559 subunit beta (45 aa).

Threonine 2 is subject to N-acetylthreonine. Topologically, residues 2-17 are cytoplasmic; that stretch reads TSNTPNQEPVSYPIFT. Residues 18–42 form a helical membrane-spanning segment; it reads VRWVAVHTLAVPTIFFLGAIAAMQF. Residue histidine 24 coordinates heme. Over 43–45 the chain is Lumenal; that stretch reads IQR.

As to quaternary structure, heterodimer of an alpha subunit and a beta subunit. PSII is composed of 1 copy each of membrane proteins PsbA, PsbB, PsbC, PsbD, PsbE, PsbF, PsbH, PsbI, PsbJ, PsbK, PsbL, PsbM, PsbT, PsbX, PsbY, PsbZ, Psb30/Ycf12, peripheral proteins PsbO, CyanoQ (PsbQ), PsbU, PsbV and a large number of cofactors. It forms dimeric complexes. Part of a photosystem II (PSII) assembly intermediate complex PSII-I; crystallized from a strain deleted of psbJ, it forms monomeric PSII before addition of the oxygen evolving complex. PSII-I includes 3 assembly factors not found in mature PSII (Psb27, Psb28 and Psb34). Heme b serves as cofactor.

It localises to the cellular thylakoid membrane. This b-type cytochrome is tightly associated with the reaction center of photosystem II (PSII). PSII is a light-driven water:plastoquinone oxidoreductase that uses light energy to abstract electrons from H(2)O, generating O(2) and a proton gradient subsequently used for ATP formation. It consists of a core antenna complex that captures photons, and an electron transfer chain that converts photonic excitation into a charge separation. This is Cytochrome b559 subunit beta from Thermosynechococcus vestitus (strain NIES-2133 / IAM M-273 / BP-1).